Reading from the N-terminus, the 69-residue chain is Neuropeptide-like protein 30 (69 aa).

Positions 1-22 (MISTSSILILVVLLACFMAASA) are cleaved as a signal peptide. A tyrosine amide mark is found at tyrosine 29, tyrosine 39, tyrosine 46, and tyrosine 53. Tryptophan 58 and tryptophan 67 each carry tryptophan amide.

Belongs to the YARP (YGGW-amide related peptide) family. As to expression, expressed in hypoderm.

It is found in the secreted. Its function is as follows. May have antimicrobial activity. May play a role in response to fungal infection. In Caenorhabditis elegans, this protein is Neuropeptide-like protein 30 (nlp-30).